Reading from the N-terminus, the 398-residue chain is Phosphoglycerate kinase (398 aa).

Substrate is bound by residues Asp-21–Asn-23, Arg-36, His-59–Arg-62, Arg-119, and Arg-157. ATP contacts are provided by residues Lys-208, Gly-296, Glu-327, and Gly-354–Ser-357.

This sequence belongs to the phosphoglycerate kinase family. As to quaternary structure, monomer.

The protein localises to the cytoplasm. It carries out the reaction (2R)-3-phosphoglycerate + ATP = (2R)-3-phospho-glyceroyl phosphate + ADP. It participates in carbohydrate degradation; glycolysis; pyruvate from D-glyceraldehyde 3-phosphate: step 2/5. This Streptococcus pneumoniae serotype 2 (strain D39 / NCTC 7466) protein is Phosphoglycerate kinase.